We begin with the raw amino-acid sequence, 141 residues long: Cystatin (141 aa).

The N-terminal stretch at 1–26 (MVHSQLPVAAPLRLLCALLLLPSATM) is a signal peptide. In terms of domain architecture, Cystatin spans 29–129 (GGLSPRSVTD…CHFQVWSRPW (101 aa)). The short motif at 73 to 77 (QVVAG) is the Secondary area of contact element. Disulfide bonds link Cys91-Cys107 and Cys120-Cys140.

Belongs to the cystatin family. Expressed at a low level by the venom gland (at protein level).

The protein resides in the secreted. Its function is as follows. Inhibits various C1 cysteine proteases including cathepsin L, papain and cathepsin B. This protein has no toxic activity and its function in the venom is unknown. It may play a role as a housekeeping or regulatory protein. In Pseudonaja textilis (Eastern brown snake), this protein is Cystatin.